The sequence spans 167 residues: MPTRSLPTFLTLLLLASIDWVSKLVVLLKSCQLSPHSSAFLYSYVWGHFSFLIIPSFNEGAAFGLFAQYKIPLLIFRVCVILGLALFLRIKYKSLHRRTRIALTLILAGALGNVGDILLHGKVVDFLFLSYYSWRFPSFNLADAFISIGTLLLIGHLYFNKESKKCF.

4 consecutive transmembrane segments (helical) span residues 8–28, 46–66, 68–88, and 101–121; these read TFLTLLLLASIDWVSKLVVLL, WGHFSFLIIPSFNEGAAFGLF, QYKIPLLIFRVCVILGLALFL, and IALTLILAGALGNVGDILLHG. Active-site residues include Asp-125 and Asp-143. The chain crosses the membrane as a helical span at residues 139–159; sequence FNLADAFISIGTLLLIGHLYF.

It belongs to the peptidase A8 family.

The protein localises to the cell inner membrane. It catalyses the reaction Release of signal peptides from bacterial membrane prolipoproteins. Hydrolyzes -Xaa-Yaa-Zaa-|-(S,diacylglyceryl)Cys-, in which Xaa is hydrophobic (preferably Leu), and Yaa (Ala or Ser) and Zaa (Gly or Ala) have small, neutral side chains.. It functions in the pathway protein modification; lipoprotein biosynthesis (signal peptide cleavage). This protein specifically catalyzes the removal of signal peptides from prolipoproteins. The protein is Lipoprotein signal peptidase of Chlamydia trachomatis serovar L2b (strain UCH-1/proctitis).